The primary structure comprises 134 residues: Cytochrome b5 (134 aa).

One can recognise a Cytochrome b5 heme-binding domain in the interval 6–82 (VKYFTRAEVA…MKQYKVGELV (77 aa)). Positions 41 and 65 each coordinate heme. The helical transmembrane segment at 111–131 (WLMPFVLGLVATLIYKFFFGT) threads the bilayer.

This sequence belongs to the cytochrome b5 family.

It localises to the endoplasmic reticulum membrane. The protein localises to the microsome membrane. In terms of biological role, cytochrome b5 is a membrane bound hemoprotein which function as an electron carrier for several membrane bound oxygenases. The sequence is that of Cytochrome b5 (Cyt-b5) from Musca domestica (House fly).